A 515-amino-acid chain; its full sequence is Signal transduction histidine-protein kinase/phosphatase MprB (515 aa).

The Cytoplasmic segment spans residues 1 to 24; sequence MTLPPPPSRLKPPRNTSSLSLRWR. The helical transmembrane segment at 25–45 threads the bilayer; that stretch reads VMLLAMSMVAMVVVLMSVAVY. Residues 46–165 are Extracellular-facing; it reads AVVSRALYDD…TGQVLGRLGT (120 aa). A helical membrane pass occupies residues 166-186; that stretch reads VLLIVGGVGVAVAAIAGGMVA. Positions 187-239 constitute an HAMP domain; it reads RAGLRPVGRLTQAAERVARTDDLRPIPVFGSDELARLTEAFNMMLRALTESRE. Over 187-515 the chain is Cytoplasmic; that stretch reads RAGLRPVGRL…GKSRSASKEL (329 aa). The 221-residue stretch at 247-467 folds into the Histidine kinase domain; it reads DAGHELRTPL…SFYVMLPGRP (221 aa). Histidine 250 is modified (phosphohistidine; by autocatalysis). Residues 468–515 form a disordered region; the sequence is LTPGGNGTAPVPAAQFDPDMRSAGSRADRRVIKNTETNGKSRSASKEL.

The cofactor is Mg(2+). It depends on Mn(2+) as a cofactor. Post-translationally, autophosphorylated.

It is found in the cell membrane. The catalysed reaction is ATP + protein L-histidine = ADP + protein N-phospho-L-histidine.. Its function is as follows. Member of the two-component regulatory system MprB/MprA which contributes to maintaining a balance among several systems involved in stress resistance and is required for establishment and maintenance of persistent infection in the host. In response to environmental signals MprB acts both as a membrane-associated protein kinase that undergoes autophosphorylation and subsequently transfers the phosphate to MprA, and a protein phosphatase that dephosphorylates phospho-MprA. The protein is Signal transduction histidine-protein kinase/phosphatase MprB (mprB) of Mycobacterium sp. (strain KMS).